We begin with the raw amino-acid sequence, 184 residues long: Large ribosomal subunit protein uL5c (184 aa).

Belongs to the universal ribosomal protein uL5 family. As to quaternary structure, part of the 50S ribosomal subunit; contacts the 5S rRNA.

The protein localises to the plastid. It is found in the chloroplast. Binds 5S rRNA, forms part of the central protuberance of the 50S subunit. In Nephroselmis olivacea (Green alga), this protein is Large ribosomal subunit protein uL5c (rpl5).